The chain runs to 122 residues: Serum amyloid A-2 protein (122 aa).

The N-terminal stretch at 1 to 18 (MKLLSGLLLCSLVLGVSG) is a signal peptide. Glutamine 19 carries the pyrrolidone carboxylic acid modification. The disordered stretch occupies residues 90-122 (GAEDSMADQAANEWGRSGKDPNHFRPKGLPDKY). Residues 105–122 (RSGKDPNHFRPKGLPDKY) show a composition bias toward basic and acidic residues.

Belongs to the SAA family. In terms of assembly, apolipoprotein of the HDL complex. In terms of tissue distribution, expressed by the liver; secreted in plasma.

It is found in the secreted. Functionally, major acute phase reactant. The protein is Serum amyloid A-2 protein (SAA2) of Oryctolagus cuniculus (Rabbit).